The sequence spans 269 residues: MTKVIIAGASGRMGQRVAHMVEAHPELEYAAAFEAAGNPAIGKDIGRIVFGEENGVIVGEGLESVIADGDVIIDFTFHTATMEFARIAAKHGKAMVIGTTGLSVDELAELKDLSASFPCVQAPNMSVCVNVLFKLAKKTAAILGDDYDIEILEAHHNKKKDAPSGTALKLAEMAAEGVGRNLAEVGVYERNGIIGERDPKEIGIQTLRAADIVGEHTIYFAGAGERLEISHRAHSRDHFAKGAATAAAWLVGRENGIYDMFDVLGLQDL.

NAD(+) is bound by residues 8–13 (GASGRM), E34, 98–100 (GTT), and 122–125 (APNM). H155 functions as the Proton donor/acceptor in the catalytic mechanism. Position 156 (H156) interacts with (S)-2,3,4,5-tetrahydrodipicolinate. The Proton donor role is filled by K159. 165-166 (GT) is a (S)-2,3,4,5-tetrahydrodipicolinate binding site.

Belongs to the DapB family.

It localises to the cytoplasm. It carries out the reaction (S)-2,3,4,5-tetrahydrodipicolinate + NAD(+) + H2O = (2S,4S)-4-hydroxy-2,3,4,5-tetrahydrodipicolinate + NADH + H(+). The catalysed reaction is (S)-2,3,4,5-tetrahydrodipicolinate + NADP(+) + H2O = (2S,4S)-4-hydroxy-2,3,4,5-tetrahydrodipicolinate + NADPH + H(+). Its pathway is amino-acid biosynthesis; L-lysine biosynthesis via DAP pathway; (S)-tetrahydrodipicolinate from L-aspartate: step 4/4. Catalyzes the conversion of 4-hydroxy-tetrahydrodipicolinate (HTPA) to tetrahydrodipicolinate. The protein is 4-hydroxy-tetrahydrodipicolinate reductase of Desulfotalea psychrophila (strain LSv54 / DSM 12343).